A 136-amino-acid chain; its full sequence is Large ribosomal subunit protein bL17 (136 aa).

This sequence belongs to the bacterial ribosomal protein bL17 family. As to quaternary structure, part of the 50S ribosomal subunit. Contacts protein L32.

The sequence is that of Large ribosomal subunit protein bL17 from Rickettsia conorii (strain ATCC VR-613 / Malish 7).